A 368-amino-acid polypeptide reads, in one-letter code: Methionine import ATP-binding protein MetN (368 aa).

The segment covering methionine 1–alanine 14 has biased composition (polar residues). Residues methionine 1 to threonine 27 are disordered. Low complexity predominate over residues glycine 15 to threonine 27. Positions isoleucine 31–valine 270 constitute an ABC transporter domain. Glycine 67 to serine 74 serves as a coordination point for ATP.

This sequence belongs to the ABC transporter superfamily. Methionine importer (TC 3.A.1.24) family. In terms of assembly, the complex is composed of two ATP-binding proteins (MetN), two transmembrane proteins (MetI) and a solute-binding protein (MetQ).

Its subcellular location is the cell membrane. It carries out the reaction L-methionine(out) + ATP + H2O = L-methionine(in) + ADP + phosphate + H(+). The catalysed reaction is D-methionine(out) + ATP + H2O = D-methionine(in) + ADP + phosphate + H(+). Its function is as follows. Part of the ABC transporter complex MetNIQ involved in methionine import. Responsible for energy coupling to the transport system. The chain is Methionine import ATP-binding protein MetN from Corynebacterium jeikeium (strain K411).